Here is a 106-residue protein sequence, read N- to C-terminus: Serine rich endogenous peptide 7 (106 aa).

The signal sequence occupies residues 1 to 26 (MGKKCSSKFRQMLVLVLLLIVFTCLS). Basic and acidic residues-rich tracts occupy residues 46–56 (GIEDEGQERTH) and 65–77 (RSVEKTHHSEGRR). The tract at residues 46-106 (GIEDEGQERT…GGGRIPVAAS (61 aa)) is disordered. 2 short sequence motifs (SCOOP motif) span residues 58 to 72 (LNSKKSSRSVEKTHH) and 86 to 100 (GIRAGPSKSGQGGGR). 2 short sequence motifs (sxS motif essential for MIK2 binding) span residues 64–66 (SRS) and 92–94 (SKS).

The protein belongs to the serine rich endogenous peptide (SCOOP) phytocytokine family. As to quaternary structure, interacts with MIK2 (via extracellular leucine-rich repeat domain); this interaction triggers the formation of complex between MIK2 and the BAK1/SERK3 and SERK4 coreceptors, and subsequent BAK1 activation by phosphorylation. As to expression, mostly expressed in roots, and, to a lower extent, in seedlings shoots.

The protein resides in the cell membrane. It localises to the secreted. Its subcellular location is the extracellular space. It is found in the apoplast. In terms of biological role, brassicaceae-specific phytocytokine (plant endogenous peptide released into the apoplast) perceived by MIK2 in a BAK1/SERK3 and SERK4 coreceptors-dependent manner, that modulates various physiological and antimicrobial processes including growth prevention and reactive oxygen species (ROS) response regulation. The protein is Serine rich endogenous peptide 7 of Arabidopsis thaliana (Mouse-ear cress).